A 298-amino-acid chain; its full sequence is Tyrosine recombinase XerC (298 aa).

One can recognise a Core-binding (CB) domain in the interval 2–88 (TDLHTDVERY…ALRSFFDWLV (87 aa)). One can recognise a Tyr recombinase domain in the interval 109–288 (HLPKNIDVDD…DFQHLASVYD (180 aa)). Residues R148, K172, H240, R243, and H266 contribute to the active site. Y275 acts as the O-(3'-phospho-DNA)-tyrosine intermediate in catalysis.

This sequence belongs to the 'phage' integrase family. XerC subfamily. Forms a cyclic heterotetrameric complex composed of two molecules of XerC and two molecules of XerD, in which XerC interacts with XerD via its C-terminal region, XerD interacts with XerC via its C-terminal region and so on.

It is found in the cytoplasm. FtsK may regulate the catalytic switch between XerC and XerD in the heterotetrameric complex during the two steps of the recombination process. Functionally, site-specific tyrosine recombinase, which acts by catalyzing the cutting and rejoining of the recombining DNA molecules. Binds cooperatively to specific DNA consensus sequences that are separated from XerD binding sites by a short central region, forming the heterotetrameric XerC-XerD complex that recombines DNA substrates. The complex is essential to convert dimers of the bacterial chromosome into monomers to permit their segregation at cell division. It also contributes to the segregational stability of plasmids. In the complex XerC specifically exchanges the top DNA strands. This Shigella flexneri serotype 5b (strain 8401) protein is Tyrosine recombinase XerC.